We begin with the raw amino-acid sequence, 366 residues long: Peptide chain release factor 2 (366 aa).

Q251 carries the post-translational modification N5-methylglutamine.

Belongs to the prokaryotic/mitochondrial release factor family. Methylated by PrmC. Methylation increases the termination efficiency of RF2.

Its subcellular location is the cytoplasm. Its function is as follows. Peptide chain release factor 2 directs the termination of translation in response to the peptide chain termination codons UGA and UAA. This Exiguobacterium sp. (strain ATCC BAA-1283 / AT1b) protein is Peptide chain release factor 2.